Consider the following 500-residue polypeptide: Probable cytosol aminopeptidase (500 aa).

The Mn(2+) site is built by K265 and D270. Residue K277 is part of the active site. Positions 288, 347, and 349 each coordinate Mn(2+). Residue R351 is part of the active site.

Belongs to the peptidase M17 family. Mn(2+) serves as cofactor.

The protein localises to the cytoplasm. The catalysed reaction is Release of an N-terminal amino acid, Xaa-|-Yaa-, in which Xaa is preferably Leu, but may be other amino acids including Pro although not Arg or Lys, and Yaa may be Pro. Amino acid amides and methyl esters are also readily hydrolyzed, but rates on arylamides are exceedingly low.. It catalyses the reaction Release of an N-terminal amino acid, preferentially leucine, but not glutamic or aspartic acids.. Functionally, presumably involved in the processing and regular turnover of intracellular proteins. Catalyzes the removal of unsubstituted N-terminal amino acids from various peptides. This Rickettsia africae (strain ESF-5) protein is Probable cytosol aminopeptidase.